Consider the following 346-residue polypeptide: GTP 3',8-cyclase (346 aa).

One can recognise a Radical SAM core domain in the interval Gln-10–Leu-240. Residue Arg-19 participates in GTP binding. [4Fe-4S] cluster-binding residues include Cys-26 and Cys-30. Tyr-32 contacts S-adenosyl-L-methionine. Position 33 (Cys-33) interacts with [4Fe-4S] cluster. Arg-65 is a binding site for GTP. Residue Gly-69 coordinates S-adenosyl-L-methionine. Thr-104 lines the GTP pocket. Ser-129 provides a ligand contact to S-adenosyl-L-methionine. Lys-177 lines the GTP pocket. Met-211 is a binding site for S-adenosyl-L-methionine. The [4Fe-4S] cluster site is built by Cys-274 and Cys-277. Arg-279–Arg-281 is a binding site for GTP. Residue Cys-291 coordinates [4Fe-4S] cluster. Positions Ser-326–Gly-346 are disordered.

Belongs to the radical SAM superfamily. MoaA family. As to quaternary structure, monomer and homodimer. The cofactor is [4Fe-4S] cluster.

It carries out the reaction GTP + AH2 + S-adenosyl-L-methionine = (8S)-3',8-cyclo-7,8-dihydroguanosine 5'-triphosphate + 5'-deoxyadenosine + L-methionine + A + H(+). The protein operates within cofactor biosynthesis; molybdopterin biosynthesis. In terms of biological role, catalyzes the cyclization of GTP to (8S)-3',8-cyclo-7,8-dihydroguanosine 5'-triphosphate. The sequence is that of GTP 3',8-cyclase from Parasynechococcus marenigrum (strain WH8102).